Here is a 407-residue protein sequence, read N- to C-terminus: Probable tRNA pseudouridine synthase D (407 aa).

Aspartate 81 serves as the catalytic Nucleophile. The region spanning 151-372 is the TRUD domain; the sequence is GFPNYFGIQR…PGGRRELLIR (222 aa).

Belongs to the pseudouridine synthase TruD family.

The catalysed reaction is uridine(13) in tRNA = pseudouridine(13) in tRNA. Could be responsible for synthesis of pseudouridine from uracil-13 in transfer RNAs. In Pyrococcus furiosus (strain ATCC 43587 / DSM 3638 / JCM 8422 / Vc1), this protein is Probable tRNA pseudouridine synthase D.